The chain runs to 706 residues: Solute carrier organic anion transporter family member 6C1 (706 aa).

A disordered region spans residues 1–24 (MAHVRNKKSDDKKAMVVAKEDTNK). The Cytoplasmic segment spans residues 1–94 (MAHVRNKKSD…PFVQRFNNID (94 aa)). A compositionally biased stretch (basic and acidic residues) spans 7-24 (KKSDDKKAMVVAKEDTNK). The chain crosses the membrane as a helical span at residues 95–118 (GFMTLYVAAVLIHGALFAVVDMTL). Topologically, residues 119-130 (NIYQVQFSLTRT) are extracellular. A helical transmembrane segment spans residues 131 to 151 (EWYLMDFSDYIASFVVAIIIA). The Cytoplasmic portion of the chain corresponds to 152–159 (HFGSKGNR). Residues 160–180 (TRWIAASCILMGLESMLFAFP) form a helical membrane-spanning segment. The Extracellular segment spans residues 181 to 218 (FFTYEIIIPGRQSIELCMEENEKRNIICGNSVPNRSKC). Asparagine 214 carries an N-linked (GlcNAc...) asparagine glycan. Residues 219–241 (IYFHIAGQCIHGIAGMPIYILGI) form a helical membrane-spanning segment. Topologically, residues 242 to 253 (TFIFDHIPTSSC) are cytoplasmic. Residues 254–277 (GFYLAIGHSAYLIGYLLGMVGGLQ) form a helical membrane-spanning segment. The Extracellular segment spans residues 278-301 (NFQPPPKEKTVEIEPAKVYQLLQS). A helical transmembrane segment spans residues 302–324 (GWWKTFLIIAAISFCVSFMMVCF). Over 325-374 (PTSLPGAHKLRLAKRKEPPTIDRRLKDMKIQPHLKGFLHNIWHILKNPLM) the chain is Cytoplasmic. Residues 375-396 (LTQAICKVSEYLTFNTSLYFLP) traverse the membrane as a helical segment. Over 397 to 410 (HHLQTQFLITPGIA) the chain is Extracellular. Residues 411-432 (SLLTGAFVLPGGIIGHFLGGLI) traverse the membrane as a helical segment. The Cytoplasmic segment spans residues 433–445 (VDRLEMTNKNKLK). The chain crosses the membrane as a helical span at residues 446 to 466 (FTLVTTVVSVGLFLLIFFVEC). Topologically, residues 467–565 (QTTTFAGINE…IAGTCDSDCL (99 aa)) are extracellular. The Kazal-like domain maps to 485–540 (GNLTADCNEYCDCTTSLYTSICGRDEKEYFSPCFAGCKATKVSQTEKTYYNCSCIK). Asparagine 486 carries an N-linked (GlcNAc...) asparagine glycan. Cystine bridges form between cysteine 491–cysteine 521, cysteine 497–cysteine 517, and cysteine 506–cysteine 538. An N-linked (GlcNAc...) asparagine glycan is attached at asparagine 535. Residues 566 to 589 (KLPLFFAFYFSATVFSNMCSIPVI) traverse the membrane as a helical segment. The Cytoplasmic segment spans residues 590–604 (SIILQSVPANFTSLS). Residues 605 to 624 (LGVTYAIVKFVASVPAPLLF) traverse the membrane as a helical segment. The Extracellular portion of the chain corresponds to 625 to 652 (RLSSAIACIYWDNNRCGGKERCWIYNKN). The chain crosses the membrane as a helical span at residues 653-675 (ILVYEFMGIWMSSQLIIVLLNIY). The Cytoplasmic segment spans residues 676-706 (AIQIHDVVVHGEITESKTTVKDVKEQKERKA).

The protein belongs to the organo anion transporter (TC 2.A.60) family. In terms of assembly, component of the CatSper complex or CatSpermasome composed of the core pore-forming members CATSPER1, CATSPER2, CATSPER3 and CATSPER4 as well as auxiliary members CATSPERB, CATSPERG2, CATSPERD, CATSPERE, CATSPERZ, C2CD6/CATSPERT, SLCO6C1, TMEM249, TMEM262 and EFCAB9. HSPA1 may be an additional auxiliary complex member. The core complex members CATSPER1, CATSPER2, CATSPER3 and CATSPER4 form a heterotetrameric channel. The auxiliary CATSPERB, CATSPERG2, CATSPERD and CATSPERE subunits form a pavilion-like structure over the pore which stabilizes the complex through interactions with CATSPER4, CATSPER3, CATSPER1 and CATSPER2 respectively. SLCO6C1 interacts with CATSPERE and TMEM262/CATSPERH interacts with CATSPERB, further stabilizing the complex. C2CD6/CATSPERT interacts at least with CATSPERD and is required for targeting the CatSper complex in the flagellar membrane.

The protein localises to the cell projection. It is found in the cilium. It localises to the flagellum membrane. In terms of biological role, auxiliary component of the CatSper complex, a complex involved in sperm cell hyperactivation. This Mus musculus (Mouse) protein is Solute carrier organic anion transporter family member 6C1.